The chain runs to 332 residues: tRNA-dihydrouridine synthase B (332 aa).

FMN-binding positions include 16 to 18 and Gln-70; that span reads PMA. Catalysis depends on Cys-100, which acts as the Proton donor. FMN is bound by residues Lys-139, 200–202, and 224–225; these read NGD and GR.

The protein belongs to the Dus family. DusB subfamily. FMN is required as a cofactor.

The enzyme catalyses a 5,6-dihydrouridine in tRNA + NAD(+) = a uridine in tRNA + NADH + H(+). The catalysed reaction is a 5,6-dihydrouridine in tRNA + NADP(+) = a uridine in tRNA + NADPH + H(+). In terms of biological role, catalyzes the synthesis of 5,6-dihydrouridine (D), a modified base found in the D-loop of most tRNAs, via the reduction of the C5-C6 double bond in target uridines. The chain is tRNA-dihydrouridine synthase B from Pasteurella multocida (strain Pm70).